Here is a 312-residue protein sequence, read N- to C-terminus: Zinc finger protein 414 (312 aa).

The segment at 1–110 (MEEKPSGPIP…RRPPPGKQIP (110 aa)) is disordered. Residues 29–48 (SPAVPAAAPSSSMSEEPGPE) are compositionally biased toward low complexity. The span at 84–93 (GLTSIVSGTS) shows a compositional bias: polar residues. 3 consecutive C2H2-type zinc fingers follow at residues 109-133 (IPCSSPGCCLSFPSVRDLAQHLRTH), 145-169 (FRCSALSCTETFPSMQELVAHSKLH), and 176-201 (FKCENCLLRFRTHRSLFKHLHVCAEH). Residues 203–312 (QSPAPPPPPA…GSDAPSGACR (110 aa)) are disordered. Residues 213–225 (LDREPPAPERPPE) are compositionally biased toward basic and acidic residues. Low complexity-rich tracts occupy residues 227 to 243 (DPASAPGLPFPLLEPFT) and 265 to 285 (SPPRLRPFLAAAPGPPASSAA).

Belongs to the krueppel C2H2-type zinc-finger protein family.

It is found in the nucleus. In terms of biological role, may be involved in transcriptional regulation. This chain is Zinc finger protein 414 (ZNF414), found in Homo sapiens (Human).